A 444-amino-acid polypeptide reads, in one-letter code: tRNA modification GTPase MnmE (444 aa).

(6S)-5-formyl-5,6,7,8-tetrahydrofolate is bound by residues Arg-23, Glu-82, and Lys-121. Positions 216–365 (GTSIVLAGLP…LKQALQKWLN (150 aa)) constitute a TrmE-type G domain. Asn-226 contributes to the K(+) binding site. GTP contacts are provided by residues 226-231 (NAGKSS), 245-251 (TDIPGTT), and 270-273 (DSAG). Ser-230 contacts Mg(2+). K(+)-binding residues include Thr-245, Ile-247, and Thr-250. Thr-251 is a Mg(2+) binding site. Residue Lys-444 coordinates (6S)-5-formyl-5,6,7,8-tetrahydrofolate.

This sequence belongs to the TRAFAC class TrmE-Era-EngA-EngB-Septin-like GTPase superfamily. TrmE GTPase family. In terms of assembly, homodimer. Heterotetramer of two MnmE and two MnmG subunits. K(+) is required as a cofactor.

It localises to the cytoplasm. Functionally, exhibits a very high intrinsic GTPase hydrolysis rate. Involved in the addition of a carboxymethylaminomethyl (cmnm) group at the wobble position (U34) of certain tRNAs, forming tRNA-cmnm(5)s(2)U34. The sequence is that of tRNA modification GTPase MnmE from Chlamydia trachomatis serovar L2 (strain ATCC VR-902B / DSM 19102 / 434/Bu).